Consider the following 253-residue polypeptide: RNA polymerase sigma factor SigI6 (253 aa).

The Polymerase core binding signature appears at 63-76 (EEYSVALLAFNEAI). The segment at residues 203 to 222 (TLELLKLAKVSRRTIERNKK) is a DNA-binding region (H-T-H motif).

It belongs to the sigma-70 factor family. SigI subfamily. As to quaternary structure, interacts with RsgI6.

The protein localises to the cytoplasm. Its activity is regulated as follows. Negatively regulated by the anti-sigma-I factor RsgI6. Binding of the polysaccharide substrate to RsgI6 may lead to the release and activation of SigI6. Sigma factors are initiation factors that promote the attachment of RNA polymerase to specific initiation sites and are then released. This sigma factor is involved in regulation of cellulosomal genes via an external polysaccharide-sensing mechanism. Recognizes the predicted promoters associated with sigI6 itself, xyn11B, xyn10D, xyn10Z, xyn10Y, cel9V, cseP, sigI1, cipA, and rsgI5. The protein is RNA polymerase sigma factor SigI6 of Acetivibrio thermocellus (strain ATCC 27405 / DSM 1237 / JCM 9322 / NBRC 103400 / NCIMB 10682 / NRRL B-4536 / VPI 7372) (Clostridium thermocellum).